Reading from the N-terminus, the 497-residue chain is 3-ketoacyl-CoA synthase 6 (497 aa).

The next 2 helical transmembrane spans lie at 25 to 45 (LVNH…AVEL) and 64 to 84 (LVQV…YFMS). The 290-residue stretch at 81 to 370 (YFMSKPRTIY…FLTSLIGRKI (290 aa)) folds into the FAE domain. Catalysis depends on residues Cys-225, His-304, His-388, His-392, His-421, and Asn-425.

The protein belongs to the thiolase-like superfamily. Chalcone/stilbene synthases family. As to expression, in epidermal cells of aerial tissues and in the tapetum of anthers near maturity. Expressed in siliques, flowers and leaves.

The protein resides in the endoplasmic reticulum membrane. The catalysed reaction is a very-long-chain acyl-CoA + malonyl-CoA + H(+) = a very-long-chain 3-oxoacyl-CoA + CO2 + CoA. It participates in lipid metabolism; fatty acid biosynthesis. Strongly inhibited by metazachlor and mefluidide. Functionally, contributes to cuticular wax and suberin biosynthesis. Involved in both decarbonylation and acyl-reduction wax synthesis pathways. Required for elongation of C24 fatty acids, an essential step of the cuticular wax production. Major condensing enzyme for stem wax and pollen coat lipid biosynthesis. The sequence is that of 3-ketoacyl-CoA synthase 6 from Arabidopsis thaliana (Mouse-ear cress).